Here is a 178-residue protein sequence, read N- to C-terminus: Caveolin-1 (178 aa).

Residue serine 2 is modified to N-acetylserine. Serine 2 bears the Phosphoserine mark. Residues serine 2–valine 94 are required for homooligomerization. Topologically, residues serine 2–serine 104 are cytoplasmic. At lysine 5 the chain carries N6-acetyllysine; alternate. A Glycyl lysine isopeptide (Lys-Gly) (interchain with G-Cter in ubiquitin); alternate cross-link involves residue lysine 5. Tyrosine 6 is modified (phosphotyrosine). Tyrosine 14 is subject to Phosphotyrosine; by ABL1. Tyrosine 25 is subject to Phosphotyrosine. Residues lysine 26, lysine 30, lysine 39, lysine 47, and lysine 57 each participate in a glycyl lysine isopeptide (Lys-Gly) (interchain with G-Cter in ubiquitin) cross-link. The interaction with CAVIN3 stretch occupies residues aspartate 82–valine 94. The segment at residues alanine 105–leucine 125 is an intramembrane region (helical). Over histidine 126 to isoleucine 178 the chain is Cytoplasmic. Residues valine 131–glutamine 142 are interacts with SPRY1, SPRY2, SPRY3 and SPRY4. 3 S-palmitoyl cysteine lipidation sites follow: cysteine 133, cysteine 143, and cysteine 156. The interval serine 149–phenylalanine 160 is interacts with SPRY1, SPRY2, and SPRY4. The segment at phenylalanine 167–isoleucine 178 is interacts with SPRY1, SPRY2, SPRY3 and SPRY4.

The protein belongs to the caveolin family. In terms of assembly, homooligomer. Interacts with GLIPR2. Interacts with NOSTRIN. Interacts with SNAP25 and STX1A. Interacts (via the N-terminus) with DPP4; the interaction is direct. Interacts with CTNNB1, CDH1 and JUP. Interacts with PACSIN2; this interaction induces membrane tubulation. Interacts with SLC7A9. Interacts with BMX and BTK. Interacts with TGFBR1. Interacts with CAVIN3 (via leucine-zipper domain) in a cholesterol-sensitive manner. Interacts with CAVIN1. Interacts with EHD2 in a cholesterol-dependent manner. Forms a ternary complex with UBXN6 and VCP; mediates CAV1 targeting to lysosomes for degradation. Interacts with ABCG1; this interaction regulates ABCG1-mediated cholesterol efflux. Interacts with NEU3; this interaction enhances NEU3 sialidase activity within caveola. Interacts (via C-terminus) with SPRY1, SPRY2 (via C-terminus), SPRY3, and SPRY4. Interacts with IGFBP5; this interaction allows trafficking of IGFBP5 from the plasma membrane to the nucleus. Phosphorylated at Tyr-14 by ABL1 in response to oxidative stress. In terms of processing, ubiquitinated. Undergo monoubiquitination and multi- and/or polyubiquitination. Monoubiquitination of N-terminal lysines promotes integration in a ternary complex with UBXN6 and VCP which promotes oligomeric CAV1 targeting to lysosomes for degradation. Ubiquitinated by ZNRF1; leading to degradation and modulation of the TLR4-mediated immune response.

Its subcellular location is the golgi apparatus membrane. It localises to the cell membrane. The protein localises to the membrane. The protein resides in the caveola. It is found in the membrane raft. In terms of biological role, may act as a scaffolding protein within caveolar membranes. Forms a stable heterooligomeric complex with CAV2 that targets to lipid rafts and drives caveolae formation. Mediates the recruitment of CAVIN proteins (CAVIN1/2/3/4) to the caveolae. Interacts directly with G-protein alpha subunits and can functionally regulate their activity. Involved in the costimulatory signal essential for T-cell receptor (TCR)-mediated T-cell activation. Its binding to DPP4 induces T-cell proliferation and NF-kappa-B activation in a T-cell receptor/CD3-dependent manner. Recruits CTNNB1 to caveolar membranes and may regulate CTNNB1-mediated signaling through the Wnt pathway. Negatively regulates TGFB1-mediated activation of SMAD2/3 by mediating the internalization of TGFBR1 from membrane rafts leading to its subsequent degradation. Binds 20(S)-hydroxycholesterol (20(S)-OHC). This is Caveolin-1 (CAV1) from Ornithorhynchus anatinus (Duckbill platypus).